A 983-amino-acid polypeptide reads, in one-letter code: Bifunctional glutamine synthetase adenylyltransferase/adenylyl-removing enzyme (983 aa).

The interval 1 to 468 (MTVENAKALF…KQYAALFEQA (468 aa)) is adenylyl removase. Residues 473–983 (AASGNLVFTG…FDKLVGHGAD (511 aa)) are adenylyl transferase.

It belongs to the GlnE family. It depends on Mg(2+) as a cofactor.

The enzyme catalyses [glutamine synthetase]-O(4)-(5'-adenylyl)-L-tyrosine + phosphate = [glutamine synthetase]-L-tyrosine + ADP. It carries out the reaction [glutamine synthetase]-L-tyrosine + ATP = [glutamine synthetase]-O(4)-(5'-adenylyl)-L-tyrosine + diphosphate. Functionally, involved in the regulation of glutamine synthetase GlnA, a key enzyme in the process to assimilate ammonia. When cellular nitrogen levels are high, the C-terminal adenylyl transferase (AT) inactivates GlnA by covalent transfer of an adenylyl group from ATP to specific tyrosine residue of GlnA, thus reducing its activity. Conversely, when nitrogen levels are low, the N-terminal adenylyl removase (AR) activates GlnA by removing the adenylyl group by phosphorolysis, increasing its activity. The regulatory region of GlnE binds the signal transduction protein PII (GlnB) which indicates the nitrogen status of the cell. The polypeptide is Bifunctional glutamine synthetase adenylyltransferase/adenylyl-removing enzyme (Brucella melitensis biotype 1 (strain ATCC 23456 / CCUG 17765 / NCTC 10094 / 16M)).